The following is a 595-amino-acid chain: UvrABC system protein C (595 aa).

The GIY-YIG domain maps to 14-91; sequence SNPGCYLHKD…IQENMPKFNI (78 aa). Residues 196–231 form the UVR domain; sequence DKIVNQLKAKMKDMSDQMAFERAAEYRDLIEAVSTL.

This sequence belongs to the UvrC family. In terms of assembly, interacts with UvrB in an incision complex.

The protein resides in the cytoplasm. Its function is as follows. The UvrABC repair system catalyzes the recognition and processing of DNA lesions. UvrC both incises the 5' and 3' sides of the lesion. The N-terminal half is responsible for the 3' incision and the C-terminal half is responsible for the 5' incision. The chain is UvrABC system protein C from Streptococcus thermophilus (strain ATCC BAA-491 / LMD-9).